Consider the following 77-residue polypeptide: Small ribosomal subunit protein bS16 (77 aa).

This sequence belongs to the bacterial ribosomal protein bS16 family.

This is Small ribosomal subunit protein bS16 from Wolinella succinogenes (strain ATCC 29543 / DSM 1740 / CCUG 13145 / JCM 31913 / LMG 7466 / NCTC 11488 / FDC 602W) (Vibrio succinogenes).